The chain runs to 259 residues: Large ribosomal subunit protein uL3c (259 aa).

The transit peptide at 1–37 directs the protein to the chloroplast; the sequence is LKTTPLTLRSPFLHRLPLRALKTHKPTSLHISKSSIS. Residues 176–211 form a disordered region; that stretch reads MTHGSKSHRQLGSIGAGTTPGRVYKGKKMPGRMGGT. The segment covering 199 to 211 has biased composition (basic residues); that stretch reads YKGKKMPGRMGGT.

The protein belongs to the universal ribosomal protein uL3 family. Part of the 50S ribosomal subunit.

The protein resides in the plastid. The protein localises to the chloroplast. In terms of biological role, one of the primary rRNA binding proteins, it binds directly near the 3'-end of the 23S rRNA, where it nucleates assembly of the 50S subunit. The chain is Large ribosomal subunit protein uL3c (RPL3) from Nicotiana tabacum (Common tobacco).